The sequence spans 219 residues: Abasic site processing protein YobE (219 aa).

The Nucleophile role is filled by Cys2. Position 2 is a thiazolidine linkage to a ring-opened DNA abasic site (Cys2). Glu106 is an active-site residue.

Belongs to the SOS response-associated peptidase family.

Formation and reversal of DNA-protein cross-link depends on DNA context. Catalyzes formation of the thiazolidine linkage in presence of abasic sites in single-stranded DNA. Mediates the reversal of the thiazolidine cross-link in presence of double stranded DNA. Sensor of abasic sites in single-stranded DNA (ssDNA) required to preserve genome integrity by promoting error-free repair of abasic sites. Recognizes and binds abasic sites in ssDNA at replication forks and chemically modifies the lesion by forming a covalent cross-link with DNA: forms a stable thiazolidine linkage between a ring-opened abasic site and the alpha-amino and sulfhydryl substituents of its N-terminal catalytic cysteine residue. The DNA-protein cross-link is then reversed: able to catalyze the reversal of the thiazolidine cross-link and cycle between a cross-link and a non-cross-linked state depending on DNA context: mediates self-reversal of the thiazolidine cross-link in double stranded DNA. May act as a protease: mediates autocatalytic processing of its N-terminal methionine in order to expose the catalytic cysteine. This chain is Abasic site processing protein YobE (yobE), found in Bacillus subtilis (strain 168).